A 369-amino-acid polypeptide reads, in one-letter code: Deoxyhypusine synthase (369 aa).

NAD(+) is bound by residues 105 to 109 (SNLIS), 131 to 133 (TAG), glutamate 137, and aspartate 238. 136-137 (EE) contributes to the spermidine binding site. Position 243 (aspartate 243) interacts with spermidine. NAD(+) is bound at residue glycine 283. Histidine 288 is a spermidine binding site. Residue 308 to 309 (TA) participates in NAD(+) binding. Spermidine-binding positions include 314-316 (GSD) and 323-329 (EAVSWGK). The active-site Nucleophile is lysine 329. 342-343 (DA) lines the NAD(+) pocket.

The protein belongs to the deoxyhypusine synthase family. The cofactor is NAD(+).

It catalyses the reaction [eIF5A protein]-L-lysine + spermidine = [eIF5A protein]-deoxyhypusine + propane-1,3-diamine. It participates in protein modification; eIF5A hypusination. In terms of biological role, catalyzes the NAD-dependent oxidative cleavage of spermidine and the subsequent transfer of the butylamine moiety of spermidine to the epsilon-amino group of a critical lysine residue of the eIF-5A precursor protein to form the intermediate deoxyhypusine residue. This is the first step of the post-translational modification of that lysine into an unusual amino acid residue named hypusine. Hypusination is unique to mature eIF-5A factor and is essential for its function. This Rattus norvegicus (Rat) protein is Deoxyhypusine synthase (Dhps).